Reading from the N-terminus, the 425-residue chain is Trigger factor (425 aa).

One can recognise a PPIase FKBP-type domain in the interval 163–248; the sequence is GDTAVIDFEG…VHEIKTKELP (86 aa).

Belongs to the FKBP-type PPIase family. Tig subfamily.

Its subcellular location is the cytoplasm. The catalysed reaction is [protein]-peptidylproline (omega=180) = [protein]-peptidylproline (omega=0). In terms of biological role, involved in protein export. Acts as a chaperone by maintaining the newly synthesized protein in an open conformation. Functions as a peptidyl-prolyl cis-trans isomerase. In Bacillus anthracis (strain A0248), this protein is Trigger factor.